The sequence spans 197 residues: ADP-ribosylation factor-like protein 6-interacting protein 1 (197 aa).

Helical transmembrane passes span 43 to 63 (VVFG…LSLI), 64 to 84 (TLLS…PMVS), 129 to 149 (TVFV…GAII), and 150 to 170 (NNLL…GLQN).

Belongs to the ARL6ip family.

Its subcellular location is the membrane. The chain is ADP-ribosylation factor-like protein 6-interacting protein 1 from Drosophila melanogaster (Fruit fly).